The chain runs to 255 residues: Syntaxin-6 (255 aa).

The residue at position 2 (Ser2) is an N-acetylserine. A Phosphoserine modification is found at Ser2. Positions 2-112 (SMEDPFFVVK…KDQMSASSVQ (111 aa)) are interaction with BLTP3B. A required for interaction with VPS51 region spans residues 2-168 (SMEDPFFVVK…QAQQQLIVEQ (167 aa)). Topologically, residues 2 to 234 (SMEDPFFVVK…VSHMTSDRRQ (233 aa)) are cytoplasmic. A coiled-coil region spans residues 41 to 74 (EEIDWTTNELRNNLRSIEWDLEDLDETISIVEAN). Phosphoserine is present on residues Ser129 and Ser152. The t-SNARE coiled-coil homology domain occupies 163–225 (QLIVEQQDEQ…DNVMKKLAKV (63 aa)). The helical; Anchor for type IV membrane protein transmembrane segment at 235-255 (WCAIAILFAVLLVVLTLFLVL) threads the bilayer.

The protein belongs to the syntaxin family. As to quaternary structure, identified in a complex containing STX6, STX12, VAMP4 and VTI1A. Binds EEA1. Interacts with VPS45A and GOPC. Interacts with MARCHF2; the interaction promotes MARCHF2-mediated ubiquitination and degradation of CFTR. Interacts with MARCHF3. Interacts with BLTP3B (via C-terminal coiled-coil domain). Interacts with BAIAP3; this interaction is increased in the presence of calcium. Interacts (via N-terminus) with VPS51. Interacts with VPS13B. As to expression, widely expressed, with relatively higher expression in brain, lung and kidney.

Its subcellular location is the golgi apparatus membrane. The protein localises to the golgi apparatus. It is found in the trans-Golgi network membrane. The protein resides in the recycling endosome membrane. In terms of biological role, SNARE promoting movement of transport vesicles to target membranes. Targets endosomes to the trans-Golgi network, and may therefore function in retrograde trafficking. Together with SNARE STX12, promotes movement of vesicles from endosomes to the cell membrane, and may therefore function in the endocytic recycling pathway. The sequence is that of Syntaxin-6 (Stx6) from Rattus norvegicus (Rat).